The following is a 325-amino-acid chain: E3 ubiquitin-protein ligase EL5 (325 aa).

The disordered stretch occupies residues 1-29 (MVRGVEQGGPAMDESSSSSSPSPVSAPAG). Positions 15-28 (SSSSSSPSPVSAPA) are enriched in low complexity. Residues 38-58 (IATVAAVLIVFAALTLAFVLL) traverse the membrane as a helical segment. The tract at residues 70 to 105 (TTTSTSGRGRRPRPRRRSGSGGDGGTGGGVDPEVLR) is disordered. Over residues 77–87 (RGRRPRPRRRS) the composition is skewed to basic residues. Residues 88 to 99 (GSGGDGGTGGGV) are compositionally biased toward gly residues. An RING-type; atypical zinc finger spans residues 134–176 (CAVCLAELEDGEEARFLPRCGHGFHAECVDMWLGSHSTCPLCR). Disordered stretches follow at residues 267–289 (GAAG…GDVE) and 303–325 (AATP…HVRN). The segment covering 268 to 281 (AAGSTSSCSCATGG) has biased composition (low complexity).

It is found in the cell membrane. It catalyses the reaction S-ubiquitinyl-[E2 ubiquitin-conjugating enzyme]-L-cysteine + [acceptor protein]-L-lysine = [E2 ubiquitin-conjugating enzyme]-L-cysteine + N(6)-ubiquitinyl-[acceptor protein]-L-lysine.. It participates in protein modification; protein ubiquitination. Its function is as follows. Functions as an E3 ubiquitin-protein ligase in cooperation with the E2 ubiquitin conjugating enzymes UBC5A and UBC5B. Involved in root development. Required for the maintenance of cell viability after the initiation of root primordial formation. May mediate the degradation of cytotoxic proteins produced in root cells after the actions of auxin, cytokinin and jasmonic acid. Mediates 'Lys-48'-linked polyubiquitination of MBP in vitro. This chain is E3 ubiquitin-protein ligase EL5 (EL5.1), found in Oryza sativa subsp. japonica (Rice).